Here is an 813-residue protein sequence, read N- to C-terminus: Putative ATPase, plasma membrane-like (813 aa).

Topologically, residues Met-1–Phe-66 are cytoplasmic. Residues Phe-67 to Met-86 form a helical membrane-spanning segment. At Leu-87 to Arg-94 the chain is on the extracellular side. The helical transmembrane segment at Gln-95–Glu-115 threads the bilayer. Residues Asp-116–Ile-245 lie on the Cytoplasmic side of the membrane. The helical transmembrane segment at Glu-246 to Trp-266 threads the bilayer. At Ile-267–Val-275 the chain is on the extracellular side. The helical transmembrane segment at Ile-276–Thr-293 threads the bilayer. Over Val-294–Lys-555 the chain is Cytoplasmic. Asp-331 functions as the 4-aspartylphosphate intermediate in the catalytic mechanism. Mg(2+) contacts are provided by Asp-500 and Asp-504. Residues His-556 to Leu-577 traverse the membrane as a helical segment. Residues Ile-578–Asp-582 are Extracellular-facing. The chain crosses the membrane as a helical span at residues Phe-583–Asp-605. The Cytoplasmic portion of the chain corresponds to Asn-606–Ile-622. Residues Phe-623–Ala-643 form a helical membrane-spanning segment. The Extracellular segment spans residues Ala-644 to Ala-664. The helical transmembrane segment at Glu-665–Ile-685 threads the bilayer. Over Gln-686–Gly-697 the chain is Cytoplasmic. The helical transmembrane segment at Glu-698–Ala-718 threads the bilayer. Residues Ser-719 to Glu-726 are Extracellular-facing. Residues Gly-727–Leu-747 form a helical membrane-spanning segment. Topologically, residues Asp-748–Val-813 are cytoplasmic. Ser-776 carries the post-translational modification Phosphoserine.

It belongs to the cation transport ATPase (P-type) (TC 3.A.3) family. Type IIIA subfamily.

It localises to the membrane. In Arabidopsis thaliana (Mouse-ear cress), this protein is Putative ATPase, plasma membrane-like.